Consider the following 307-residue polypeptide: Aspartate carbamoyltransferase catalytic subunit (307 aa).

Carbamoyl phosphate-binding residues include R54 and T55. L-aspartate is bound at residue K83. Positions 104, 132, and 135 each coordinate carbamoyl phosphate. The L-aspartate site is built by R165 and R228. Carbamoyl phosphate is bound by residues L267 and P268.

Belongs to the aspartate/ornithine carbamoyltransferase superfamily. ATCase family. In terms of assembly, heterododecamer (2C3:3R2) of six catalytic PyrB chains organized as two trimers (C3), and six regulatory PyrI chains organized as three dimers (R2).

It carries out the reaction carbamoyl phosphate + L-aspartate = N-carbamoyl-L-aspartate + phosphate + H(+). It participates in pyrimidine metabolism; UMP biosynthesis via de novo pathway; (S)-dihydroorotate from bicarbonate: step 2/3. Catalyzes the condensation of carbamoyl phosphate and aspartate to form carbamoyl aspartate and inorganic phosphate, the committed step in the de novo pyrimidine nucleotide biosynthesis pathway. In Clostridium botulinum (strain Alaska E43 / Type E3), this protein is Aspartate carbamoyltransferase catalytic subunit.